A 1179-amino-acid chain; its full sequence is DNA-directed RNA polymerase subunit beta (1179 aa).

It belongs to the RNA polymerase beta chain family. In terms of assembly, the RNAP catalytic core consists of 2 alpha, 1 beta, 1 beta' and 1 omega subunit. When a sigma factor is associated with the core the holoenzyme is formed, which can initiate transcription.

The catalysed reaction is RNA(n) + a ribonucleoside 5'-triphosphate = RNA(n+1) + diphosphate. Functionally, DNA-dependent RNA polymerase catalyzes the transcription of DNA into RNA using the four ribonucleoside triphosphates as substrates. The chain is DNA-directed RNA polymerase subunit beta from Oceanobacillus iheyensis (strain DSM 14371 / CIP 107618 / JCM 11309 / KCTC 3954 / HTE831).